Reading from the N-terminus, the 418-residue chain is AP-3 complex subunit mu-2 (418 aa).

The region spanning 176 to 417 (NNEAYFDVIE…MTKAGKFQVR (242 aa)) is the MHD domain.

This sequence belongs to the adaptor complexes medium subunit family. AP-3 associates with the BLOC-1 complex. Adaptor protein complex 3 (AP-3) is a heterotetramer composed of two large adaptins (delta-type subunit AP3D1 and beta-type subunit AP3B1 or AP3B2), a medium adaptin (mu-type subunit AP3M1 or AP3M2) and a small adaptin (sigma-type subunit APS1 or AP3S2).

It localises to the golgi apparatus. The protein resides in the cytoplasmic vesicle membrane. Its function is as follows. Part of the AP-3 complex, an adaptor-related complex which is not clathrin-associated. The complex is associated with the Golgi region as well as more peripheral structures. It facilitates the budding of vesicles from the Golgi membrane and may be directly involved in trafficking to lysosomes. In concert with the BLOC-1 complex, AP-3 is required to target cargos into vesicles assembled at cell bodies for delivery into neurites and nerve terminals. This is AP-3 complex subunit mu-2 (AP3M2) from Homo sapiens (Human).